A 140-amino-acid chain; its full sequence is Nucleoside diphosphate kinase (140 aa).

ATP is bound by residues lysine 11, phenylalanine 59, arginine 87, threonine 93, arginine 104, and asparagine 114. Histidine 117 acts as the Pros-phosphohistidine intermediate in catalysis.

It belongs to the NDK family. As to quaternary structure, homotetramer. Mg(2+) is required as a cofactor.

Its subcellular location is the cytoplasm. The enzyme catalyses a 2'-deoxyribonucleoside 5'-diphosphate + ATP = a 2'-deoxyribonucleoside 5'-triphosphate + ADP. It carries out the reaction a ribonucleoside 5'-diphosphate + ATP = a ribonucleoside 5'-triphosphate + ADP. Major role in the synthesis of nucleoside triphosphates other than ATP. The ATP gamma phosphate is transferred to the NDP beta phosphate via a ping-pong mechanism, using a phosphorylated active-site intermediate. The polypeptide is Nucleoside diphosphate kinase (Bradyrhizobium sp. (strain ORS 278)).